A 485-amino-acid chain; its full sequence is Noelin (485 aa).

The first 16 residues, 1–16 (MSVPLLKIGVVLSTMA), serve as a signal peptide directing secretion. Residues Asn-33, Asn-103, Asn-187, Asn-288, Asn-307, Asn-394, Asn-431, and Asn-473 are each glycosylated (N-linked (GlcNAc...) asparagine). The stretch at 87-225 (RDARTKQLRQ…ERLRACMQKL (139 aa)) forms a coiled coil. Positions 226–478 (ACGKLTGISD…QILYNVTLFH (253 aa)) constitute an Olfactomedin-like domain. Cys-227 and Cys-409 are joined by a disulfide.

In terms of assembly, homotetramer; disulfide-linked. Dimer of dimers, giving rise to a V-shaped homotretramer. Isoform 1 and isoform 3 interact with RTN4R. Identified in a complex with RTN4R and LINGO1. Peripherally associated with AMPAR complex. AMPAR complex consists of an inner core made of 4 pore-forming GluA/GRIA proteins (GRIA1, GRIA2, GRIA3 and GRIA4) and 4 major auxiliary subunits arranged in a twofold symmetry. One of the two pairs of distinct binding sites is occupied either by CNIH2, CNIH3 or CACNG2, CACNG3. The other harbors CACNG2, CACNG3, CACNG4, CACNG8 or GSG1L. This inner core of AMPAR complex is complemented by outer core constituents binding directly to the GluA/GRIA proteins at sites distinct from the interaction sites of the inner core constituents. Outer core constituents include at least PRRT1, PRRT2, CKAMP44/SHISA9, FRRS1L and NRN1. The proteins of the inner and outer core serve as a platform for other, more peripherally associated AMPAR constituents, including OLFM1. Alone or in combination, these auxiliary subunits control the gating and pharmacology of the AMPAR complex and profoundly impact their biogenesis and protein processing. Interacts with OLFM2.

The protein localises to the secreted. The protein resides in the synapse. Its subcellular location is the endoplasmic reticulum. It localises to the cell projection. It is found in the axon. The protein localises to the perikaryon. Contributes to the regulation of axonal growth in the embryonic and adult central nervous system by inhibiting interactions between RTN4R and LINGO1. Inhibits RTN4R-mediated axon growth cone collapse. May play an important role in regulating the production of neural crest cells by the neural tube. May be required for normal responses to olfactory stimuli. The sequence is that of Noelin (OLFM1) from Homo sapiens (Human).